A 219-amino-acid polypeptide reads, in one-letter code: Probable GTP-binding protein EngB (219 aa).

Residues 24–207 (VQPEIAFAGR…HELIESWVRP (184 aa)) form the EngB-type G domain. Residues 32–39 (GRSNAGKS), 59–63 (GRTQH), 81–84 (DLPG), 148–151 (TKCD), and 186–188 (FSA) each bind GTP. Positions 39 and 61 each coordinate Mg(2+).

Belongs to the TRAFAC class TrmE-Era-EngA-EngB-Septin-like GTPase superfamily. EngB GTPase family. It depends on Mg(2+) as a cofactor.

Necessary for normal cell division and for the maintenance of normal septation. In Burkholderia ambifaria (strain MC40-6), this protein is Probable GTP-binding protein EngB.